The following is a 225-amino-acid chain: 3-dehydroquinate dehydratase (225 aa).

3-dehydroquinate-binding positions include S6, 30-32 (EWR), and R62. The active-site Proton donor/acceptor is the H118. K143 serves as the catalytic Schiff-base intermediate with substrate. The 3-dehydroquinate site is built by R186, S205, and Q209.

This sequence belongs to the type-I 3-dehydroquinase family. Homodimer.

It catalyses the reaction 3-dehydroquinate = 3-dehydroshikimate + H2O. It functions in the pathway metabolic intermediate biosynthesis; chorismate biosynthesis; chorismate from D-erythrose 4-phosphate and phosphoenolpyruvate: step 3/7. Functionally, involved in the third step of the chorismate pathway, which leads to the biosynthesis of aromatic amino acids. Catalyzes the cis-dehydration of 3-dehydroquinate (DHQ) and introduces the first double bond of the aromatic ring to yield 3-dehydroshikimate. In Streptococcus pneumoniae (strain ATCC 700669 / Spain 23F-1), this protein is 3-dehydroquinate dehydratase.